A 600-amino-acid chain; its full sequence is Zinc metalloproteinase-disintegrin-like stejnihagin-B (600 aa).

Residues 1–20 (MIEVLLVTICLAVFPYQGSS) form the signal peptide. Positions 21-191 (IILESGNVND…KASQLVVTAE (171 aa)) are excised as a propeptide. A Pyrrolidone carboxylic acid modification is found at Q192. Positions 198 to 389 (RYVKLAIVAD…YNPQCILNAL (192 aa)) constitute a Peptidase M12B domain. N-linked (GlcNAc...) asparagine glycosylation is found at N261 and N317. Intrachain disulfides connect C306–C384, C346–C368, and C348–C351. Position 331 (H331) interacts with Zn(2+). E332 is a catalytic residue. 2 residues coordinate Zn(2+): H335 and H341. The Disintegrin domain occupies 397–483 (PPVCGNELLE…DCPTDSFHRN (87 aa)). The Ca(2+) site is built by V399, N402, L404, E406, E409, and D412. Cystine bridges form between C400-C429, C411-C424, C413-C419, C423-C446, C437-C443, C442-C468, C455-C475, C462-C494, C487-C499, C506-C556, C521-C565, C534-C544, C551-C587, and C581-C593. N425 is a glycosylation site (N-linked (GlcNAc...) asparagine). The short motif at 461–463 (ECD) is the D/ECD-tripeptide element. N-linked (GlcNAc...) asparagine glycosylation is present at N467. N-linked (GlcNAc...) asparagine glycosylation occurs at N513.

The protein belongs to the venom metalloproteinase (M12B) family. P-III subfamily. P-IIIa sub-subfamily. In terms of assembly, monomer. Zn(2+) is required as a cofactor. In terms of tissue distribution, expressed by the venom gland.

Its subcellular location is the secreted. Its function is as follows. This metalloproteinase-disintegrin-like impairs hemostasis in the envenomed animal. The polypeptide is Zinc metalloproteinase-disintegrin-like stejnihagin-B (Trimeresurus stejnegeri (Chinese green tree viper)).